The primary structure comprises 510 residues: MNNKSISPIILMILDGWGHSTNAKGNAIHEANTPIIDKLWDNYPKTLLSASGEHVGLPHKQMGNSEVGHTTIGAGRIINQDLVKISKSIKNKEFFNNYQLHNIYKYSCEKNSKVHIVGLCSNGGVHSHINHLKALIQISKQYKVMTCLHLITDGRDTLPKQAKLFVKEIIDIIDENYNTEICTISGRYYSMDRDCRWSRTEKAYKAMVENSCNQNSSSDILSIIDKYYEQNISDEFLPPTKISMHNIVHNDSLIFFNFRPDRIRQLLHSFAKPNFKGFQRKTIKNLMLTTFTEYDSTLSIPTVFPNEPKKNFLGQIISNSGLKQLRLAETEKYAHVTYFFNGGIEEPFPGENRELIASPKVETYDLPPEMSAYQLTNSLIEAINKQLYQFIVINYANPDMIGHTGNMNATIEAIEIVDQCIEKVLHTIEDTNNILIITSDHGNADYMLTDENKPCTSHSINPVPFILINNRQKKQTNLHSHGSLADIAPTILDILNINIPNEMNGKSLIT.

Asp15 and Ser65 together coordinate Mn(2+). The Phosphoserine intermediate role is filled by Ser65. Substrate-binding positions include His126, 155-156, Arg187, Arg193, 259-262, and Lys332; these read RD and RPDR. Positions 399, 403, 440, 441, and 458 each coordinate Mn(2+).

Belongs to the BPG-independent phosphoglycerate mutase family. Mn(2+) is required as a cofactor.

It is found in the plastid. The protein localises to the chloroplast. It catalyses the reaction (2R)-2-phosphoglycerate = (2R)-3-phosphoglycerate. The protein operates within carbohydrate degradation; glycolysis; pyruvate from D-glyceraldehyde 3-phosphate: step 3/5. In terms of biological role, catalyzes the interconversion of 2-phosphoglycerate and 3-phosphoglycerate. The sequence is that of 2,3-bisphosphoglycerate-independent phosphoglycerate mutase from Antithamnion sp. (Red alga).